The primary structure comprises 500 residues: Lysine--tRNA ligase (500 aa).

Mg(2+) is bound by residues Glu410 and Glu417.

Belongs to the class-II aminoacyl-tRNA synthetase family. In terms of assembly, homodimer. Requires Mg(2+) as cofactor.

It is found in the cytoplasm. The enzyme catalyses tRNA(Lys) + L-lysine + ATP = L-lysyl-tRNA(Lys) + AMP + diphosphate. This chain is Lysine--tRNA ligase, found in Shewanella frigidimarina (strain NCIMB 400).